The sequence spans 746 residues: Dystrobrevin alpha (746 aa).

Residues 1–288 are interaction with MAGEE1; the sequence is MIEDSGKRGN…SHSNQHQMKE (288 aa). The ZZ-type zinc-finger motif lies at 238–294; it reads FHPVECSYCHSESMMGFRYRCQQCHNYQLCQDCFWRGHAGGSHSNQHQMKEYTSWKS. Residues Cys-243, Cys-246, Cys-258, Cys-261, Cys-267, Cys-270, His-280, and His-284 each coordinate Zn(2+). Residues 397-447 are syntrophin-binding region; sequence DRLADEHVLIGLYVNMLRNDPPCMLESSNRLDEEHRLIARYAARLAAESSS. Residues 458-557 adopt a coiled-coil conformation; sequence DISFTIDANK…KLLKEEELKQ (100 aa). Disordered regions lie at residues 555 to 577, 646 to 667, and 684 to 721; these read LKQGTQGASSPRSSPSHTISRPI, ETESTVDSEFSRPQFEDLAPSP, and YIHGGAASTTHGDMVPEDGDPYTQPEDGNYENESVRQL. Residues 563-576 show a composition bias toward low complexity; it reads SSPRSSPSHTISRP. Ser-666 is subject to Phosphoserine.

This sequence belongs to the dystrophin family. Dystrobrevin subfamily. In terms of assembly, interacts with dystrophin, utrophin and the syntrophins SNTA1, SNTB1, SNTB2, SNTG1 and SNTG2. Binds dystrobrevin binding protein 1. Interacts with MAGEE1. Interacts with Ctnnal1. The interaction is required for correct localization of both Ctnnal1 and Dtna. As to quaternary structure, does not interact with utrophin. Does not interact with syntrophin. In terms of processing, phosphorylation of isoform 2 on tyrosine kinase substrate domain present in the C-terminus. As to expression, expressed in skeletal muscle, heart, lung and brain. Sarcolemma and neuromuscular junction in skeletal muscle. Isoform 2 is restricted to the neuromuscular junction. Isoforms 5 and 6 are only expressed in muscle.

It is found in the cytoplasm. It localises to the synapse. The protein localises to the cell membrane. Its function is as follows. Involved in synapse maturation and required for normal muscle function. The sequence is that of Dystrobrevin alpha (Dtna) from Mus musculus (Mouse).